The primary structure comprises 177 residues: MSSIPAGTDPGSCGANFKNDRKRRDKINDRIQELLSIIPKDFFRDYYGNSGSNDTLSESTPGALGLSSKAKGTGTKDGKPNKGQILTQAVEYISHLQNQVDTQNREEVELMVKATQLAKQTGTIVNDINLENTSAEVALSRIGVGPLAATNDDSVRPPAKRLSSFEYGGYGEYGNGS.

The segment at 1–24 is disordered; sequence MSSIPAGTDPGSCGANFKNDRKRR. One can recognise a bHLH domain in the interval 11 to 96; it reads GSCGANFKND…TQAVEYISHL (86 aa). Residues Ser-50 and Ser-52 each carry the phosphoserine modification. 2 disordered regions span residues 52–82 and 147–177; these read SNDT…KPNK and LAAT…GNGS. Phosphothreonine is present on Thr-60. Over residues 168-177 the composition is skewed to gly residues; sequence GGYGEYGNGS.

As to quaternary structure, binds DNA as a heterodimer with RTG3.

The protein resides in the nucleus. In terms of biological role, required for a novel path of interorganelle communication between mitochondria, peroxisomes and the nucleus, thereby maintaining a functional metabolic interaction between the tricarboxylic acid and glyoxylate cycles. Transcription factor that regulates CIT2 gene expression. Binds to two identical sites oriented as inverted repeats 28 bp apart in a regulatory upstream activation sequence element (UASR) in the CIT2 promoter. The core binding site is 5'-GGTCAC-3'. The chain is Retrograde regulation protein 1 (RTG1) from Saccharomyces cerevisiae (strain ATCC 204508 / S288c) (Baker's yeast).